We begin with the raw amino-acid sequence, 503 residues long: MSEQQNTELDFHGEMAVRREKLAALRAKGNAFPNTFRRDALAQDLHHQYDETDGEQLKEKNPQVAVAGRIMTRRAMGKATFITIQDMSGKIQLYVACDNLPEGVYAEDVKSWDLGDIVGIKGTLFKTKTNELTVKAHEVQLLTKALRPLPDKFHGLSDQETRYRQRYLDLISNEESRRTFVIRSKVIAGIREYFIGKGFIEVETPMLQVIPGGAAARPFVTHHNALDIDMYLRIAPELYLKRLVVGGFERVFELNRNFRNEGVSVRHNPEFTMIEYYQAYADYHDLMDNTEELLRKLALDILGTTIVPYGEYEFDFGKPFERITMHDAVLKYGAEKGIVKEDLYDLERAKAAATKLGIEIQKSWGLGSVVNAIFEEVAEHHLIQPTFLTAHPAEISPLARRNDENPEVTDRFELFIGGREIGNGFSELNDAEDQAERFDAQVAAKDAGDDEAMFKDDDFVTALEHGLPPTAGEGLGIDRLAMLFANAPSIRDVILFPAMKHKA.

Mg(2+) contacts are provided by Glu-413 and Glu-420.

Belongs to the class-II aminoacyl-tRNA synthetase family. As to quaternary structure, homodimer. The cofactor is Mg(2+).

Its subcellular location is the cytoplasm. The enzyme catalyses tRNA(Lys) + L-lysine + ATP = L-lysyl-tRNA(Lys) + AMP + diphosphate. The polypeptide is Lysine--tRNA ligase (Actinobacillus succinogenes (strain ATCC 55618 / DSM 22257 / CCUG 43843 / 130Z)).